The chain runs to 256 residues: tRNA pseudouridine synthase A (256 aa).

D52 serves as the catalytic Nucleophile. Y110 contributes to the substrate binding site.

Belongs to the tRNA pseudouridine synthase TruA family. In terms of assembly, homodimer.

It carries out the reaction uridine(38/39/40) in tRNA = pseudouridine(38/39/40) in tRNA. Its function is as follows. Formation of pseudouridine at positions 38, 39 and 40 in the anticodon stem and loop of transfer RNAs. The polypeptide is tRNA pseudouridine synthase A (Stenotrophomonas maltophilia (strain K279a)).